The primary structure comprises 148 residues: Receptor activity-modifying protein 1 (148 aa).

The N-terminal stretch at Met-1 to Ala-26 is a signal peptide. Disulfide bonds link Cys-27–Cys-82, Cys-40–Cys-72, and Cys-57–Cys-104. The Extracellular portion of the chain corresponds to Cys-27 to Ile-118. Residues Leu-119–Arg-140 traverse the membrane as a helical segment. Residues Ser-141–Val-148 are Cytoplasmic-facing.

Belongs to the RAMP family. Heterodimer of CALCRL and RAMP1; the interaction induces allosteric modulation of CALCRL function and CGRP1/CALCA and CGRP2/CALCB ligand specificity. Heterodimer of CALCR and RAMP1; interaction forms the AMYR1 receptor complex for amylin/IAPP and CGRP1/CALCA ligands.

It is found in the cell membrane. Its function is as follows. Accessory protein that interacts with and modulates the function of G-protein coupled receptors including calcitonin gene-related peptide type 1 receptor (CALCRL) and calcitonin receptor (CALCR). Required for the transport of CALCRL to the plasma membrane. Together with CALCRL, form the receptor complex for the calcitonin gene-related peptides CGRP1/CALCA and CGRP2/CALCB. Together with CALCR, form the AMYR1 receptor complex for amylin/IAPP and CGRP1/CALCA. The protein is Receptor activity-modifying protein 1 of Rattus norvegicus (Rat).